The chain runs to 434 residues: ATP-dependent protease ATPase subunit HslU (434 aa).

ATP contacts are provided by residues I18, 60-65 (GVGKTE), D247, E312, and R384.

The protein belongs to the ClpX chaperone family. HslU subfamily. A double ring-shaped homohexamer of HslV is capped on each side by a ring-shaped HslU homohexamer. The assembly of the HslU/HslV complex is dependent on binding of ATP.

The protein localises to the cytoplasm. Its function is as follows. ATPase subunit of a proteasome-like degradation complex; this subunit has chaperone activity. The binding of ATP and its subsequent hydrolysis by HslU are essential for unfolding of protein substrates subsequently hydrolyzed by HslV. HslU recognizes the N-terminal part of its protein substrates and unfolds these before they are guided to HslV for hydrolysis. This Brucella abortus (strain S19) protein is ATP-dependent protease ATPase subunit HslU.